We begin with the raw amino-acid sequence, 288 residues long: MRLFEGAFQPWKLASTNLMQQCLLLNKKSQFHTTCILQGLKKQKANQRRKQNLKRREELRKQNLDTLADPIIGHSSEWIARLLKPYEILVERKKPNFPIRSIKFPASMETINLIVEKFEKIRASATEETKDFIKLNEVNEFPSSDTSLESNQDGFERLHPLAERLERMSQLSDLRKESIHRIFNIENSNSKTLRLNNKQLAVESFARNERDTGSPEVQAAVYTSRILALSDHCKNHKKDQTGKRMLRYYVHQRQRMLKYLRKVNFDRYVHCIKNLGLTDELVLREVTQ.

The N-terminal 50 residues, 1–50, are a transit peptide targeting the mitochondrion; sequence MRLFEGAFQPWKLASTNLMQQCLLLNKKSQFHTTCILQGLKKQKANQRRK.

It belongs to the universal ribosomal protein uS15 family. As to quaternary structure, component of the mitochondrial small ribosomal subunit (mt-SSU). Mature yeast 74S mitochondrial ribosomes consist of a small (37S) and a large (54S) subunit. The 37S small subunit contains a 15S ribosomal RNA (15S mt-rRNA) and at least 32 different proteins. The 54S large subunit contains a 21S rRNA (21S mt-rRNA) and at least 45 different proteins.

It localises to the mitochondrion. Component of the mitochondrial ribosome (mitoribosome), a dedicated translation machinery responsible for the synthesis of mitochondrial genome-encoded proteins, including at least some of the essential transmembrane subunits of the mitochondrial respiratory chain. The mitoribosomes are attached to the mitochondrial inner membrane and translation products are cotranslationally integrated into the membrane. The chain is Small ribosomal subunit protein uS15m (mrps28) from Schizosaccharomyces pombe (strain 972 / ATCC 24843) (Fission yeast).